Consider the following 329-residue polypeptide: Ferredoxin--NADP reductase (329 aa).

FAD contacts are provided by Asp28, Gln36, Tyr41, Ala81, Phe115, Asp282, and Thr323.

The protein belongs to the ferredoxin--NADP reductase type 2 family. In terms of assembly, homodimer. FAD serves as cofactor.

The catalysed reaction is 2 reduced [2Fe-2S]-[ferredoxin] + NADP(+) + H(+) = 2 oxidized [2Fe-2S]-[ferredoxin] + NADPH. The sequence is that of Ferredoxin--NADP reductase from Anaplasma marginale (strain St. Maries).